The primary structure comprises 388 residues: Chorismate synthase (388 aa).

Arg-39 and Arg-45 together coordinate NADP(+). FMN contacts are provided by residues Arg-130 to Ser-132, Asn-251 to Ala-252, Gly-296, Lys-311 to Thr-315, and Arg-337.

This sequence belongs to the chorismate synthase family. Homotetramer. FMNH2 is required as a cofactor.

The enzyme catalyses 5-O-(1-carboxyvinyl)-3-phosphoshikimate = chorismate + phosphate. Its pathway is metabolic intermediate biosynthesis; chorismate biosynthesis; chorismate from D-erythrose 4-phosphate and phosphoenolpyruvate: step 7/7. In terms of biological role, catalyzes the anti-1,4-elimination of the C-3 phosphate and the C-6 proR hydrogen from 5-enolpyruvylshikimate-3-phosphate (EPSP) to yield chorismate, which is the branch point compound that serves as the starting substrate for the three terminal pathways of aromatic amino acid biosynthesis. This reaction introduces a second double bond into the aromatic ring system. This Streptococcus pyogenes serotype M3 (strain SSI-1) protein is Chorismate synthase.